A 278-amino-acid polypeptide reads, in one-letter code: Envelope glycoprotein L (278 aa).

Residues Met-1 to Ser-30 form the signal peptide. Residues Val-43–Glu-256 form the gL betaherpesvirus-type domain. Cysteines 154 and 159 form a disulfide.

Belongs to the herpesviridae glycoprotein L (gL) family. Betaherpesvirinae gL subfamily. Interacts with glycoprotein H (gH); this interaction is necessary for the correct processing and cell surface expression of gH. Forms the envelope pentamer complex (PC) composed of gH, gL, UL128, UL130, and UL131A. The pentamer interacts with host NRP2. Forms the envelope trimer complex composed of gH, gL, and gO. The trimer interacts with host PDGFRA. The trimer also interacts with host EPHA2.

It localises to the virion membrane. The protein localises to the host cell membrane. The protein resides in the host Golgi apparatus. It is found in the host trans-Golgi network. The heterodimer glycoprotein H-glycoprotein L is required for the fusion of viral and plasma membranes leading to virus entry into the host cell. Acts as a functional inhibitor of gH and maintains gH in an inhibited form. Upon binding to host integrins, gL dissociates from gH leading to activation of the viral fusion glycoproteins gB and gH. In human cytomegalovirus, forms two distincts complexes to mediate viral entry, a trimer and a pentamer at the surface of the virion envelope. The gH-gL-gO trimer is required for infection in fibroblasts by interacting with host PDGFRA, and in glioblastoma cells by interacting with host EPHA2. The gH-gL-UL128-UL130-UL131A pentamer is essential for viral entry in epithelial, endothelial and myeloid cells via interaction with host NRP2. This Homo sapiens (Human) protein is Envelope glycoprotein L.